A 147-amino-acid chain; its full sequence is Epididymal secretory protein E3-alpha (147 aa).

The first 25 residues, 1–25, serve as a signal peptide directing secretion; sequence MTSSLKIWGILLALLCILCRLCVYS.

In terms of tissue distribution, epididymis, with predominant expression in the corpus region. Moderately expressed in the vas deferens; only low levels are detectable in the caput and cauda regions.

The protein localises to the secreted. Its function is as follows. Possible function in sperm maturation. This is Epididymal secretory protein E3-alpha (EDDM3A) from Homo sapiens (Human).